A 78-amino-acid polypeptide reads, in one-letter code: Acyl carrier protein (78 aa).

Residues 2–77 (STIEERVKKI…AAIDYVKAHQ (76 aa)) enclose the Carrier domain. Ser-37 bears the O-(pantetheine 4'-phosphoryl)serine mark.

The protein belongs to the acyl carrier protein (ACP) family. Post-translationally, 4'-phosphopantetheine is transferred from CoA to a specific serine of apo-ACP by AcpS. This modification is essential for activity because fatty acids are bound in thioester linkage to the sulfhydryl of the prosthetic group.

It localises to the cytoplasm. The protein operates within lipid metabolism; fatty acid biosynthesis. In terms of biological role, carrier of the growing fatty acid chain in fatty acid biosynthesis. In Pseudomonas putida (strain ATCC 47054 / DSM 6125 / CFBP 8728 / NCIMB 11950 / KT2440), this protein is Acyl carrier protein.